Here is a 151-residue protein sequence, read N- to C-terminus: Deoxyuridine 5'-triphosphate nucleotidohydrolase (151 aa).

Residues 70 to 72 (RSG), N83, 87 to 89 (LID), and M97 contribute to the substrate site.

Belongs to the dUTPase family. Mg(2+) serves as cofactor.

The catalysed reaction is dUTP + H2O = dUMP + diphosphate + H(+). It functions in the pathway pyrimidine metabolism; dUMP biosynthesis; dUMP from dCTP (dUTP route): step 2/2. In terms of biological role, this enzyme is involved in nucleotide metabolism: it produces dUMP, the immediate precursor of thymidine nucleotides and it decreases the intracellular concentration of dUTP so that uracil cannot be incorporated into DNA. The protein is Deoxyuridine 5'-triphosphate nucleotidohydrolase of Salmonella enteritidis PT4 (strain P125109).